A 134-amino-acid polypeptide reads, in one-letter code: Large ribosomal subunit protein uL18 (134 aa).

This sequence belongs to the universal ribosomal protein uL18 family. As to quaternary structure, part of the 50S ribosomal subunit; part of the 5S rRNA/L5/L18/L25 subcomplex. Contacts the 5S and 23S rRNAs.

Its function is as follows. This is one of the proteins that bind and probably mediate the attachment of the 5S RNA into the large ribosomal subunit, where it forms part of the central protuberance. The sequence is that of Large ribosomal subunit protein uL18 from Corynebacterium glutamicum (strain ATCC 13032 / DSM 20300 / JCM 1318 / BCRC 11384 / CCUG 27702 / LMG 3730 / NBRC 12168 / NCIMB 10025 / NRRL B-2784 / 534).